Reading from the N-terminus, the 242-residue chain is Myogenic factor 6 (242 aa).

Residues 31-63 form a disordered region; that stretch reads SPLYPGSDGTLSPCQDQMPPEAGSDSSGEEHVL. One can recognise a bHLH domain in the interval 93–144; the sequence is DRRKAATLRERRRLKKINEAFEALKRRTVANPNQRLPKVEILRSAINYIERL.

Efficient DNA binding requires dimerization with another bHLH protein.

The protein resides in the nucleus. In terms of biological role, involved in muscle differentiation (myogenic factor). Induces fibroblasts to differentiate into myoblasts. Probable sequence specific DNA-binding protein. The chain is Myogenic factor 6 (MYF6) from Sus scrofa (Pig).